The chain runs to 319 residues: Coproporphyrin III ferrochelatase (319 aa).

2 residues coordinate Fe(2+): His193 and Glu274.

This sequence belongs to the ferrochelatase family.

It localises to the cytoplasm. The catalysed reaction is Fe-coproporphyrin III + 2 H(+) = coproporphyrin III + Fe(2+). The protein operates within porphyrin-containing compound metabolism; protoheme biosynthesis. Its function is as follows. Involved in coproporphyrin-dependent heme b biosynthesis. Catalyzes the insertion of ferrous iron into coproporphyrin III to form Fe-coproporphyrin III. This is Coproporphyrin III ferrochelatase from Streptococcus mutans serotype c (strain ATCC 700610 / UA159).